The following is a 419-amino-acid chain: MTTQLEQAWELAKQRFAAVGIDVEEALRQLDRLPVSMHCWQGDDVSGFENPEGSLTGGIQATGNYPGKARNASELRADLEQAMRLIPGPKRLNLHAIYLESDTPVARDQIKPEHFKNWVEWAKANQLGLDFNPSCFSHPLSADGFTLSHADDSIRQFWIDHCKASRRVSAYFGEQLGTPSVMNIWIPDGMKDITVDRLAPRQRLLAALDEVISEKLDPAHHIDAVESKLFGIGAESYTVGSNEFYMGYATSRQTALCLDAGHFHPTEVISDKISAAMLYVPQLLLHVSRPVRWDSDHVVLLDDETQAIASEIVRHDLFDRVHIGLDFFDASINRIAAWVIGTRNMKKALLRALLEPTTELRKLEAAGDYTARLALLEEQKSLPWQAVWEMYCQRHDTPAGSEWLESVRAYEKAILSQRG.

Mn(2+) is bound by residues His-262, Asp-294, and Asp-296.

The protein belongs to the rhamnose isomerase family. In terms of assembly, homotetramer. The cofactor is Mn(2+).

It localises to the cytoplasm. It carries out the reaction L-rhamnopyranose = L-rhamnulose. Its pathway is carbohydrate degradation; L-rhamnose degradation; glycerone phosphate from L-rhamnose: step 1/3. Its function is as follows. Catalyzes the interconversion of L-rhamnose and L-rhamnulose. This is L-rhamnose isomerase from Escherichia fergusonii (strain ATCC 35469 / DSM 13698 / CCUG 18766 / IAM 14443 / JCM 21226 / LMG 7866 / NBRC 102419 / NCTC 12128 / CDC 0568-73).